The primary structure comprises 502 residues: Keratin, type II cytoskeletal 8 (502 aa).

A head region spans residues 1 to 98 (MSVRSTKVTY…DPSIQQVRTE (98 aa)). A phosphoserine mark is found at serine 13, serine 26, serine 37, and serine 40. A coil 1A region spans residues 99 to 134 (EKEQIKTLNNKFASFIDKVRFLEQQNKMLETKWNLL). The IF rod domain occupies 99-410 (EKEQIKTLNN…KLLEGEESRL (312 aa)). Residues 135–151 (QNQKTTRSNMDGMFEAY) are linker 1. The interval 152–243 (ISNLRRQLDG…QLYEEELREM (92 aa)) is coil 1B. The interval 244–267 (QSQISDTSVVLSMDNNRSLDLDGI) is linker 12. The interval 268-406 (IAEVRAQYED…ATYRKLLEGE (139 aa)) is coil 2. The necessary for interaction with PNN stretch occupies residues 269–390 (AEVRAQYEDV…DYQELMNVKL (122 aa)). A tail region spans residues 407–502 (ESRLESGFQN…SESSDVFSKP (96 aa)). Serine 425, serine 428, serine 436, and serine 444 each carry phosphoserine.

The protein belongs to the intermediate filament family. In terms of assembly, heterotetramer of two type I and two type II keratins. Keratin-8 associates with keratin-18. Expressed in oocytes, eggs, embryos, liver and intestinal mucosa.

Its subcellular location is the cytoplasm. The protein localises to the nucleus. It is found in the nucleoplasm. The protein resides in the nucleus matrix. In terms of biological role, together with KRT19, helps to link the contractile apparatus to dystrophin at the costameres of striated muscle. The chain is Keratin, type II cytoskeletal 8 from Xenopus laevis (African clawed frog).